The primary structure comprises 468 residues: ATP synthase subunit beta (468 aa).

155 to 162 (GGAGVGKT) contacts ATP.

It belongs to the ATPase alpha/beta chains family. As to quaternary structure, F-type ATPases have 2 components, CF(1) - the catalytic core - and CF(0) - the membrane proton channel. CF(1) has five subunits: alpha(3), beta(3), gamma(1), delta(1), epsilon(1). CF(0) has three main subunits: a(1), b(2) and c(9-12). The alpha and beta chains form an alternating ring which encloses part of the gamma chain. CF(1) is attached to CF(0) by a central stalk formed by the gamma and epsilon chains, while a peripheral stalk is formed by the delta and b chains.

The protein localises to the cell membrane. The enzyme catalyses ATP + H2O + 4 H(+)(in) = ADP + phosphate + 5 H(+)(out). Produces ATP from ADP in the presence of a proton gradient across the membrane. The catalytic sites are hosted primarily by the beta subunits. This is ATP synthase subunit beta from Streptococcus pneumoniae (strain ATCC BAA-255 / R6).